Consider the following 94-residue polypeptide: MLKPIGNRVIIEKKEQEQTTKSGIVLTDSAKEKSNEGVIVAVGTGRLLNDGTRVTPEVKEGDRVVFQQYAGTEVKRDNETYLVLNEEDILAVIE.

The protein belongs to the GroES chaperonin family. In terms of assembly, heptamer of 7 subunits arranged in a ring. Interacts with the chaperonin GroEL.

Its subcellular location is the cytoplasm. In terms of biological role, together with the chaperonin GroEL, plays an essential role in assisting protein folding. The GroEL-GroES system forms a nano-cage that allows encapsulation of the non-native substrate proteins and provides a physical environment optimized to promote and accelerate protein folding. GroES binds to the apical surface of the GroEL ring, thereby capping the opening of the GroEL channel. The polypeptide is Co-chaperonin GroES (Staphylococcus aureus (strain Mu50 / ATCC 700699)).